A 360-amino-acid chain; its full sequence is Photosystem II protein D1 2 (360 aa).

3 consecutive transmembrane segments (helical) span residues 29–46, 118–133, and 142–156; these read YIGW…AATI, HFLI…EWEL, and WIPV…AATA. Position 118 (His118) interacts with chlorophyll a. Tyr126 is a pheophytin a binding site. 2 residues coordinate [CaMn4O5] cluster: Asp170 and Glu189. A helical membrane pass occupies residues 197–218; that stretch reads FHMLGVAGVFGGALFAAMHGSL. His198 lines the chlorophyll a pocket. Residues His215 and 264–265 each bind a quinone; that span reads SF. Fe cation is bound at residue His215. Position 272 (His272) interacts with Fe cation. The chain crosses the membrane as a helical span at residues 274–288; it reads FLAAWPVVGIWFAAL. Positions 332, 333, 342, and 344 each coordinate [CaMn4O5] cluster. The propeptide occupies 345–360; sequence SGELAPVAMIAPSIEA.

It belongs to the reaction center PufL/M/PsbA/D family. As to quaternary structure, PSII is composed of 1 copy each of membrane proteins PsbA, PsbB, PsbC, PsbD, PsbE, PsbF, PsbH, PsbI, PsbJ, PsbK, PsbL, PsbM, PsbT, PsbX, PsbY, PsbZ, Psb30/Ycf12, peripheral proteins PsbO, CyanoQ (PsbQ), PsbU, PsbV and a large number of cofactors. It forms dimeric complexes. The cofactor is The D1/D2 heterodimer binds P680, chlorophylls that are the primary electron donor of PSII, and subsequent electron acceptors. It shares a non-heme iron and each subunit binds pheophytin, quinone, additional chlorophylls, carotenoids and lipids. D1 provides most of the ligands for the Mn4-Ca-O5 cluster of the oxygen-evolving complex (OEC). There is also a Cl(-1) ion associated with D1 and D2, which is required for oxygen evolution. The PSII complex binds additional chlorophylls, carotenoids and specific lipids.. Post-translationally, tyr-161 forms a radical intermediate that is referred to as redox-active TyrZ, YZ or Y-Z. C-terminally processed by CtpA; processing is essential to allow assembly of the oxygen-evolving complex and thus photosynthetic growth.

The protein localises to the cellular thylakoid membrane. It carries out the reaction 2 a plastoquinone + 4 hnu + 2 H2O = 2 a plastoquinol + O2. Its function is as follows. Photosystem II (PSII) is a light-driven water:plastoquinone oxidoreductase that uses light energy to abstract electrons from H(2)O, generating O(2) and a proton gradient subsequently used for ATP formation. It consists of a core antenna complex that captures photons, and an electron transfer chain that converts photonic excitation into a charge separation. The D1/D2 (PsbA/PsbD) reaction center heterodimer binds P680, the primary electron donor of PSII as well as several subsequent electron acceptors. The protein is Photosystem II protein D1 2 of Synechococcus elongatus.